The following is a 715-amino-acid chain: Palmitoyltransferase ZDHHC5 (715 aa).

Topologically, residues 1 to 13 are cytoplasmic; it reads MPAESGKRFKPSK. A helical membrane pass occupies residues 14–34; sequence YVPVSAAAIFLVGATTLFFAF. At 35-52 the chain is on the extracellular side; the sequence is TCPGLSLNVSPAVPIYNA. The helical transmembrane segment at 53 to 73 threads the bilayer; the sequence is IMFLFVLANFSMATFMDPGIF. Over 74–148 the chain is Cytoplasmic; it reads PRAEEDEDKE…NCIGRRNYRY (75 aa). Tyr91 carries the post-translational modification Phosphotyrosine. Residues 104 to 154 enclose the DHHC domain; it reads KWCATCRFYRPPRCSHCSVCDNCVEEFDHHCPWVNNCIGRRNYRYFFLFLL. Catalysis depends on Cys134, which acts as the S-palmitoyl cysteine intermediate. Residues 149 to 169 form a helical membrane-spanning segment; the sequence is FFLFLLSLTAHIMGVFGFGLL. Over 170 to 191 the chain is Extracellular; sequence YVLYHIEELSGVRTAVTMAVMC. A helical membrane pass occupies residues 192–212; sequence VAGLFFIPVAGLTGFHVVLVA. Topologically, residues 213–715 are cytoplasmic; the sequence is RGRTTNEQVT…VGGTTYEISV (503 aa). Residue Ser247 is modified to Phosphoserine. A disordered region spans residues 289–715; sequence GELRRTKSKG…VGGTTYEISV (427 aa). Thr294 bears the Phosphothreonine mark. 2 positions are modified to phosphoserine: Ser296 and Ser299. Thr303 carries the post-translational modification Phosphothreonine. Phosphoserine is present on Ser345. Phosphothreonine is present on residues Thr348 and Thr350. Residues 359–373 show a composition bias toward low complexity; that stretch reads SSSSTSAAMPHSSSA. Ser380, Ser398, Ser406, and Ser409 each carry phosphoserine. Thr411 carries the post-translational modification Phosphothreonine. 4 positions are modified to phosphoserine: Ser415, Ser425, Ser429, and Ser432. Residues 422-432 are compositionally biased toward low complexity; sequence SSGSRSSSLKS. Phosphothreonine is present on Thr436. Positions 442 to 478 are enriched in polar residues; the sequence is QLQSIRSEGTTSTSYKSLANQTRNGSLSYDSLLTPSD. Phosphoserine occurs at positions 529 and 554. A compositionally biased stretch (low complexity) spans 581 to 597; it reads PRTSSSSDDSKRSPLSK. Arg617 is subject to Omega-N-methylarginine. Phosphoserine is present on Ser621. A Phosphothreonine modification is found at Thr659. The span at 666–677 shows a compositional bias: polar residues; the sequence is LKTTYSKSNGQP. Phosphoserine is present on residues Ser684 and Ser694. Position 697 is an omega-N-methylarginine (Arg697).

It belongs to the DHHC palmitoyltransferase family. ERF2/ZDHHC9 subfamily. Post-translationally, phosphorylation regulates association with endocytic proteins and its subcellular localization. Phosphorylation by LYN during fatty acid uptake leads to inactivation of the activity. Autopalmitoylated. Palmitoylation of the C-terminal tail regulates stimulation-dependent plasma membrane motility. As to expression, highly enriched in brain, detectable in liver and heart, and undetectable in most other tissues.

Its subcellular location is the cell membrane. It catalyses the reaction L-cysteinyl-[protein] + hexadecanoyl-CoA = S-hexadecanoyl-L-cysteinyl-[protein] + CoA. Its function is as follows. Palmitoyltransferase that catalyzes the addition of palmitate onto various protein substrates such as CTNND2, CD36, GSDMD, NLRP3, NOD1, NOD2, STAT3 and S1PR1 thus plays a role in various biological processes including cell adhesion, inflammation, fatty acid uptake, bacterial sensing or cardiac functions. Plays an important role in the regulation of synapse efficacy by mediating palmitoylation of delta-catenin/CTNND2, thereby increasing synaptic delivery and surface stabilization of alpha-amino-3-hydroxy-5-methyl-4-isoxazole propionic acid receptors (AMPARs). Under basal conditions, remains at the synaptic membrane through FYN-mediated phosphorylation that prevents association with endocytic proteins. Neuronal activity enhances the internalization and trafficking of DHHC5 from spines to dendritic shafts where it palmitoylates delta-catenin/CTNND2. Regulates cell adhesion at the plasma membrane by palmitoylating GOLGA7B and DSG2. Plays a role in innate immune response by mediating the palmitoylation of NOD1 and NOD2 and their proper recruitment to the bacterial entry site and phagosomes. Also participates in fatty acid uptake by palmitoylating CD36 and thereby targeting it to the plasma membrane. Upon binding of fatty acids to CD36, gets phosphorylated by LYN leading to inactivation and subsequent CD36 caveolar endocytosis. Controls oligodendrocyte development by catalyzing STAT3 palmitoylation. Acts as a regulator of inflammatory response by mediating palmitoylation of NLRP3 and GSDMD. Palmitoylates NLRP3 to promote inflammasome assembly and activation. Activates pyroptosis by catalyzing palmitoylation of gasdermin-D (GSDMD), thereby promoting membrane translocation and pore formation of GSDMD. The sequence is that of Palmitoyltransferase ZDHHC5 (Zdhhc5) from Mus musculus (Mouse).